Reading from the N-terminus, the 81-residue chain is UPF0434 protein msl4429 (81 aa).

The protein belongs to the UPF0434 family.

The sequence is that of UPF0434 protein msl4429 from Mesorhizobium japonicum (strain LMG 29417 / CECT 9101 / MAFF 303099) (Mesorhizobium loti (strain MAFF 303099)).